A 157-amino-acid polypeptide reads, in one-letter code: Cytochrome P450 monooxygenase atG (157 aa).

Cys-97 provides a ligand contact to heme.

The protein belongs to the cytochrome P450 family. Heme is required as a cofactor.

Its pathway is secondary metabolite biosynthesis. Cytochrome P450 monooxygenase; part of the gene cluster that mediates the biosynthesis of terreic acid, a quinone epoxide inhibitor of Bruton's tyrosine kinase (BTK). The first step of the pathway is the synthesis of 6-methylsalicylic acid (6-MSA) by the 6-methylsalicylic acid synthase atX. In the biosynthesis of 6-MSA, atX utilizes one acetyl-CoA and three malonyl-CoAs as its substrates and catalyzes a series of programmed reactions including Claisen condensation, reduction, aldol cyclization, and the hydrolytic cleavage that yields 6-MSA. The 6-methylsalicylate 1-monooxygenase atA then catalyzes the decarboxylative hydroxylation of 6-MSA to 3-methylcatechol. The next step is the conversion of 3-methylcatechol to 3-methyl-1,2,4-benzenetriol by cytochrome P450 monooxygenase atE, which is enhanced by cytochrome P450 monooxygenase atG. Then, the epoxidase atD catalyzes the epoxidation and hydroxyl oxidation of 3-methyl-1,2,4-benzenetriol to terremutin. Lastly, GMC oxidoreductase atC oxidizes terremutin to terreic acid. The protein is Cytochrome P450 monooxygenase atG of Aspergillus terreus (strain NIH 2624 / FGSC A1156).